Consider the following 101-residue polypeptide: Small ribosomal subunit protein uS14 (101 aa).

This sequence belongs to the universal ribosomal protein uS14 family. Part of the 30S ribosomal subunit. Contacts proteins S3 and S10.

Functionally, binds 16S rRNA, required for the assembly of 30S particles and may also be responsible for determining the conformation of the 16S rRNA at the A site. The protein is Small ribosomal subunit protein uS14 of Anaplasma phagocytophilum (strain HZ).